Here is a 156-residue protein sequence, read N- to C-terminus: Ribosomal RNA large subunit methyltransferase H (156 aa).

S-adenosyl-L-methionine-binding positions include L73, G104, and 123–128 (LSALTL).

The protein belongs to the RNA methyltransferase RlmH family. Homodimer.

Its subcellular location is the cytoplasm. It catalyses the reaction pseudouridine(1915) in 23S rRNA + S-adenosyl-L-methionine = N(3)-methylpseudouridine(1915) in 23S rRNA + S-adenosyl-L-homocysteine + H(+). Its function is as follows. Specifically methylates the pseudouridine at position 1915 (m3Psi1915) in 23S rRNA. The protein is Ribosomal RNA large subunit methyltransferase H of Shewanella oneidensis (strain ATCC 700550 / JCM 31522 / CIP 106686 / LMG 19005 / NCIMB 14063 / MR-1).